The chain runs to 295 residues: Protoheme IX farnesyltransferase (295 aa).

9 helical membrane-spanning segments follow: residues 27–46 (IMYL…PGSI), 50–72 (IAII…NMWY), 93–115 (ISKS…VMMI), 119–136 (YISG…SFAY), 148–168 (IVIG…SVTS), 175–195 (LILF…LSLL), 219–239 (VHIL…GLFL), 244–264 (LYEI…FKVF), and 275–295 (MFTY…LASF).

It belongs to the UbiA prenyltransferase family. Protoheme IX farnesyltransferase subfamily.

The protein resides in the cell inner membrane. The catalysed reaction is heme b + (2E,6E)-farnesyl diphosphate + H2O = Fe(II)-heme o + diphosphate. Its pathway is porphyrin-containing compound metabolism; heme O biosynthesis; heme O from protoheme: step 1/1. Functionally, converts heme B (protoheme IX) to heme O by substitution of the vinyl group on carbon 2 of heme B porphyrin ring with a hydroxyethyl farnesyl side group. This is Protoheme IX farnesyltransferase from Ehrlichia canis (strain Jake).